We begin with the raw amino-acid sequence, 360 residues long: MLLLLAEFLQQFYKGFAVFQYLSLRGILGVLTALTLSLCLGPWMIRTLQMRQIGQSVRNDGPQSHLSKSGTPTMGGALILSSIGISTLLWADLSNRYVWVVLLVTFLFGAIGWVDDYRKVIEKNSRGLPSRWKYFWQSVFGLCAAIFLYTTAPSATETTLIVPMLKDVRIPLGIGFIVLTYFVIVGSSNAVNLTDGLDGLAIMPTVMVGGALGIFCYLSGNVKFAEYLLIPYVPGAGELIVFSGALIGAGLGFLWFNTYPAQVFMGDVGALALGAALGTMAVIVRQEMVLFIMGGVFVMETLSVVIQVASFKLTGRRVFRMAPIHHHFELKGWPEPRVIVRFWIITVILVLIGLATLKLR.

10 helical membrane passes run 25–45 (RGIL…PWMI), 73–93 (TMGG…WADL), 97–117 (YVWV…VDDY), 135–155 (FWQS…APSA), 170–190 (IPLG…SSNA), 199–219 (GLAI…CYLS), 236–256 (AGEL…FLWF), 263–283 (VFMG…MAVI), 288–308 (MVLF…VIQV), and 338–358 (VIVR…ATLK).

This sequence belongs to the glycosyltransferase 4 family. MraY subfamily. Mg(2+) is required as a cofactor.

The protein resides in the cell inner membrane. The enzyme catalyses UDP-N-acetyl-alpha-D-muramoyl-L-alanyl-gamma-D-glutamyl-meso-2,6-diaminopimeloyl-D-alanyl-D-alanine + di-trans,octa-cis-undecaprenyl phosphate = di-trans,octa-cis-undecaprenyl diphospho-N-acetyl-alpha-D-muramoyl-L-alanyl-D-glutamyl-meso-2,6-diaminopimeloyl-D-alanyl-D-alanine + UMP. Its pathway is cell wall biogenesis; peptidoglycan biosynthesis. Its function is as follows. Catalyzes the initial step of the lipid cycle reactions in the biosynthesis of the cell wall peptidoglycan: transfers peptidoglycan precursor phospho-MurNAc-pentapeptide from UDP-MurNAc-pentapeptide onto the lipid carrier undecaprenyl phosphate, yielding undecaprenyl-pyrophosphoryl-MurNAc-pentapeptide, known as lipid I. This Pseudomonas syringae pv. syringae (strain B728a) protein is Phospho-N-acetylmuramoyl-pentapeptide-transferase.